The primary structure comprises 261 residues: Cytochrome c oxidase subunit 3 (261 aa).

The Mitochondrial matrix portion of the chain corresponds to 1–15; that stretch reads MAHQAHSYHMVDPSP. A helical transmembrane segment spans residues 16 to 34; that stretch reads WPIFGATAALLTTSGLIMW. The Mitochondrial intermembrane portion of the chain corresponds to 35–40; sequence FHYNSL. Residues 41-66 form a helical membrane-spanning segment; it reads YLLTLGLLSMFLVMIQWWRDIVREST. Topologically, residues 67–72 are mitochondrial matrix; sequence FQGHHT. A helical transmembrane segment spans residues 73-105; it reads PTVQKGLRYGMILFITSEAFFFLGFFWAFFHSS. Topologically, residues 106–128 are mitochondrial intermembrane; the sequence is LAPTPELGAQWPPTGINPLNPLE. A helical transmembrane segment spans residues 129 to 152; that stretch reads VPLLNTAILLASGVTVTWAHHSIT. At 153–155 the chain is on the mitochondrial matrix side; that stretch reads ESN. Residues 156–183 form a helical membrane-spanning segment; that stretch reads RKQAIHALSLTIILGFYFTALQAMEYHE. Topologically, residues 184-190 are mitochondrial intermembrane; it reads ASFSIAD. The helical transmembrane segment at 191-223 threads the bilayer; sequence GVYGSTFFVATGFHGLHVIIGSSFLTVCLLRLI. The Mitochondrial matrix segment spans residues 224–232; sequence KFHFTTNHH. The helical transmembrane segment at 233–256 threads the bilayer; it reads FGFEAAAWYWHFVDVIWLFLYMSI. The Mitochondrial intermembrane segment spans residues 257–261; it reads YWWGS.

This sequence belongs to the cytochrome c oxidase subunit 3 family. As to quaternary structure, component of the cytochrome c oxidase (complex IV, CIV), a multisubunit enzyme composed of 14 subunits. The complex is composed of a catalytic core of 3 subunits MT-CO1, MT-CO2 and MT-CO3, encoded in the mitochondrial DNA, and 11 supernumerary subunits COX4I, COX5A, COX5B, COX6A, COX6B, COX6C, COX7A, COX7B, COX7C, COX8 and NDUFA4, which are encoded in the nuclear genome. The complex exists as a monomer or a dimer and forms supercomplexes (SCs) in the inner mitochondrial membrane with NADH-ubiquinone oxidoreductase (complex I, CI) and ubiquinol-cytochrome c oxidoreductase (cytochrome b-c1 complex, complex III, CIII), resulting in different assemblies (supercomplex SCI(1)III(2)IV(1) and megacomplex MCI(2)III(2)IV(2)).

Its subcellular location is the mitochondrion inner membrane. It catalyses the reaction 4 Fe(II)-[cytochrome c] + O2 + 8 H(+)(in) = 4 Fe(III)-[cytochrome c] + 2 H2O + 4 H(+)(out). Its function is as follows. Component of the cytochrome c oxidase, the last enzyme in the mitochondrial electron transport chain which drives oxidative phosphorylation. The respiratory chain contains 3 multisubunit complexes succinate dehydrogenase (complex II, CII), ubiquinol-cytochrome c oxidoreductase (cytochrome b-c1 complex, complex III, CIII) and cytochrome c oxidase (complex IV, CIV), that cooperate to transfer electrons derived from NADH and succinate to molecular oxygen, creating an electrochemical gradient over the inner membrane that drives transmembrane transport and the ATP synthase. Cytochrome c oxidase is the component of the respiratory chain that catalyzes the reduction of oxygen to water. Electrons originating from reduced cytochrome c in the intermembrane space (IMS) are transferred via the dinuclear copper A center (CU(A)) of subunit 2 and heme A of subunit 1 to the active site in subunit 1, a binuclear center (BNC) formed by heme A3 and copper B (CU(B)). The BNC reduces molecular oxygen to 2 water molecules using 4 electrons from cytochrome c in the IMS and 4 protons from the mitochondrial matrix. The sequence is that of Cytochrome c oxidase subunit 3 (MT-CO3) from Struthio camelus (Common ostrich).